A 112-amino-acid polypeptide reads, in one-letter code: Cell cycle protein GpsB (112 aa).

Residues 42-77 (YQKMADMNNEVVKLSEENNKLKKEVEELRLRVATSR) adopt a coiled-coil conformation. The tract at residues 75–97 (TSRPSDNKSFSSNNSSSSNNNVD) is disordered. Residues 81–95 (NKSFSSNNSSSSNNN) are compositionally biased toward low complexity.

This sequence belongs to the GpsB family. In terms of assembly, forms polymers through the coiled coil domains. Interacts with PBP1, MreC and EzrA.

It is found in the cytoplasm. Functionally, divisome component that associates with the complex late in its assembly, after the Z-ring is formed, and is dependent on DivIC and PBP2B for its recruitment to the divisome. Together with EzrA, is a key component of the system that regulates PBP1 localization during cell cycle progression. Its main role could be the removal of PBP1 from the cell pole after pole maturation is completed. Also contributes to the recruitment of PBP1 to the division complex. Not essential for septum formation. The polypeptide is Cell cycle protein GpsB (Staphylococcus haemolyticus (strain JCSC1435)).